A 338-amino-acid polypeptide reads, in one-letter code: Lipoate-protein ligase A (338 aa).

The BPL/LPL catalytic domain maps to 29-216; it reads PATQRVLFLW…AFFAHYGERV (188 aa). ATP is bound by residues Arg71, 76 to 79, and Lys134; that span reads GAVF. Lys134 lines the (R)-lipoate pocket.

It belongs to the LplA family. As to quaternary structure, monomer.

It is found in the cytoplasm. The catalysed reaction is L-lysyl-[lipoyl-carrier protein] + (R)-lipoate + ATP = N(6)-[(R)-lipoyl]-L-lysyl-[lipoyl-carrier protein] + AMP + diphosphate + H(+). The protein operates within protein modification; protein lipoylation via exogenous pathway; protein N(6)-(lipoyl)lysine from lipoate: step 1/2. It participates in protein modification; protein lipoylation via exogenous pathway; protein N(6)-(lipoyl)lysine from lipoate: step 2/2. Functionally, catalyzes both the ATP-dependent activation of exogenously supplied lipoate to lipoyl-AMP and the transfer of the activated lipoyl onto the lipoyl domains of lipoate-dependent enzymes. The protein is Lipoate-protein ligase A of Shigella sonnei (strain Ss046).